We begin with the raw amino-acid sequence, 1163 residues long: MPVRRGHVAPQNTFLDTIIRKFEGQSRKFIIANARVENCAVIYCNDGFCELCGYSRAEVMQRPCTCDFLHGPRTQRRAAAQIAQALLGAEERKVEIAFYRKDGSCFLCLVDVVPVKNEDGAVIMFILNFEVVMEKDMVGSPAHDTNHRGPSTSWLASGRAKTFRLKLPALLALTARESPMRTGSTGSPGAPGAVVVDVDLTPAAPSSESLALDEVSAMDNHVAGLGPAEERRALVGPASASPVASIPGPHPSPRAQSLNPDASGSSCSLARTRSRESCASVRRASSADDIEAMRAGALPLPPRHASTGAMHPLRSGLLNSTSDSDLVRYRTISKIPQITLNFVDLKGDPFLASPTSDREIIAPKIKERTHNVTEKVTQVLSLGADVLPEYKLQAPRIHRWTILHYSPFKAVWDWLILLLVIYTAVFTPYSAAFLLKETEDGSQAPDCGYACQPLAVVDLLVDIMFIVDILINFRTTYVNANEEVVSHPGRIAVHYFKGWFLIDMVAAIPFDLLIFGSGSEELIGLLKTARLLRLVRVARKLDRYSEYGAAVLFLLMCTFALIAHWLACIWYAIGNMEQPHMDSHIGWLHNLGDQIGKPYNSSGLGGPSIKDKYVTALYFTFSSLTSVGFGNVSPNTNSEKIFSICVMLIGSLMYASIFGNVSAIIQRLYSGTARYHTQMLRVREFIRFHQIPNPLRQRLEEYFQHAWSYTNGIDMNAVLKGFPECLQADICLHLNRSLLQHCKPFRGATKGCLRALAMKFKTTHAPPGDTLVHAGDLLTALYFISRGSIEILRGDVVVAILGKNDIFGEPLNLYARPGKSNGDVRALTYCDLHKIHRDDLLEVLDMYPEFSDHFWSSLEITFNLRDTNMIPGSPSSAELESGFNRQRKRKLSFRRRTDKDTEQPGEVSALGQGPARVGPGPSCRGQPGGPWGESPSSGPSSPESSEDEGPGRSSSPLRLVPFSSPRPPGDSPGGEPLTEDGEKSSDTCNPLSGAFSGVSNIFSFWGDSRGRQYQELPRCPAPAPSLLNIPLSSPGRRSRGDVESRLDALQRQLNRLETRLSADMATVLQLLQRQMTLVPPAYSAVTTPGPGPTSTSPLLPVGPVPTLTLDSLSQVSQFVAFEELPAGAPELPQDGPTRRLSLPGQLGALTSQPLHRHGSDPGS.

Residues 1 to 405 (MPVRRGHVAP…RIHRWTILHY (405 aa)) lie on the Cytoplasmic side of the membrane. Positions 17-88 (TIIRKFEGQS…AAQIAQALLG (72 aa)) constitute a PAS domain. The region spanning 92–144 (RKVEIAFYRKDGSCFLCLVDVVPVKNEDGAVIMFILNFEVVMEKDMVGSPAHD) is the PAC domain. The disordered stretch occupies residues 235–286 (VGPASASPVASIPGPHPSPRAQSLNPDASGSSCSLARTRSRESCASVRRASS). Ser239 and Ser245 each carry phosphoserine. Residues 254–271 (RAQSLNPDASGSSCSLAR) show a composition bias toward polar residues. Residues Ser285, Ser286, Ser322, and Ser353 each carry the phosphoserine modification. The chain crosses the membrane as a helical span at residues 406–426 (SPFKAVWDWLILLLVIYTAVF). Topologically, residues 427–452 (TPYSAAFLLKETEDGSQAPDCGYACQ) are extracellular. Residues 453-473 (PLAVVDLLVDIMFIVDILINF) traverse the membrane as a helical segment. The Cytoplasmic segment spans residues 474-497 (RTTYVNANEEVVSHPGRIAVHYFK). Residues 498 to 518 (GWFLIDMVAAIPFDLLIFGSG) traverse the membrane as a helical segment. Topologically, residues 519-522 (SEEL) are extracellular. Residues 523-543 (IGLLKTARLLRLVRVARKLDR) form a helical; Voltage-sensor membrane-spanning segment. At 544–549 (YSEYGA) the chain is on the cytoplasmic side. The chain crosses the membrane as a helical span at residues 550-570 (AVLFLLMCTFALIAHWLACIW). The Extracellular segment spans residues 571 to 613 (YAIGNMEQPHMDSHIGWLHNLGDQIGKPYNSSGLGGPSIKDKY). N-linked (GlcNAc...) asparagine glycosylation occurs at Asn600. An intramembrane region (pore-forming) is located at residues 614 to 634 (VTALYFTFSSLTSVGFGNVSP). A Selectivity filter motif is present at residues 626–631 (SVGFGN). Residues 635 to 640 (NTNSEK) are Extracellular-facing. A helical transmembrane segment spans residues 641 to 661 (IFSICVMLIGSLMYASIFGNV). The Cytoplasmic segment spans residues 662-1163 (SAIIQRLYSG…LHRHGSDPGS (502 aa)). The segment at 744–844 (PFRGATKGCL…IHRDDLLEVL (101 aa)) is cNMP-binding domain. Phosphoserine is present on residues Ser873 and Ser876. Disordered regions lie at residues 873–992 (SPSS…NPLS), 1015–1043 (ELPRCPAPAPSLLNIPLSSPGRRSRGDVE), and 1126–1163 (AGAPELPQDGPTRRLSLPGQLGALTSQPLHRHGSDPGS). The span at 885–894 (RQRKRKLSFR) shows a compositional bias: basic residues. Residues 932-943 (GESPSSGPSSPE) show a composition bias toward low complexity. Position 1018 is an omega-N-methylarginine (Arg1018). Residues 1039–1066 (RGDVESRLDALQRQLNRLETRLSADMAT) are a coiled coil. Position 1141 is a phosphoserine (Ser1141).

The protein belongs to the potassium channel family. H (Eag) (TC 1.A.1.20) subfamily. Kv11.1/KCNH2 sub-subfamily. In terms of assembly, the potassium channel is probably composed of a homo- or heterotetrameric complex of pore-forming alpha subunits that can associate with modulating beta subunits. Interacts with DNAJB12 and DNAJB14; chaperones DNAJB12 and DNAJB14 promote tetramerization. Heteromultimer with KCNH6/ERG2 and KCNH7/ERG3. Interacts with ALG10B. Forms a stable complex with KCNE1 or KCNE2, and that this heteromultimerization regulates Inward rectifier potassium channel activity. Interacts with CANX. The core-glycosylated, but not the fully glycosylated form interacts with RNF207. Interacts with NDFIP1 and NDFIP2; this interaction decreases the cell membrane expression by targeting KCNH2, through interaction with NEDD4L, for the degradation through the multivesicular bodies (MVBs)-lysosomal pathway. In terms of processing, phosphorylated on serine and threonine residues. Phosphorylation by PKA inhibits ion conduction. In terms of tissue distribution, highly expressed in brain and testis, slightly less so in heart, adrenal, retina and thymus. Detected at lower levels in lung, soleus, tibialis, and at very low levels in cornea and lens. A shorter transcript is detected in skeletal muscle. Found in pituitary.

The protein localises to the cell membrane. The catalysed reaction is K(+)(in) = K(+)(out). Pore-forming (alpha) subunit of voltage-gated inwardly rectifying potassium channel. Characterized by unusual gating kinetics by producing relatively small outward currents during membrane depolarization and large inward currents during subsequent repolarization which reflect a rapid inactivation during depolarization and quick recovery from inactivation but slow deactivation (closing) during repolarization. Channel properties are modulated by cAMP and subunit assembly. Forms a stable complex with KCNE1 or KCNE2, and that this heteromultimerization regulates inward rectifier potassium channel activity. The chain is Voltage-gated inwardly rectifying potassium channel KCNH2 from Rattus norvegicus (Rat).